A 511-amino-acid chain; its full sequence is Trafficking protein particle complex subunit 13 homolog (511 aa).

The protein belongs to the TRAPPC13 family.

The polypeptide is Trafficking protein particle complex subunit 13 homolog (Dictyostelium discoideum (Social amoeba)).